A 91-amino-acid polypeptide reads, in one-letter code: Small ribosomal subunit protein bS20 (91 aa).

This sequence belongs to the bacterial ribosomal protein bS20 family.

Its function is as follows. Binds directly to 16S ribosomal RNA. This is Small ribosomal subunit protein bS20 from Mycoplasma mobile (strain ATCC 43663 / 163K / NCTC 11711) (Mesomycoplasma mobile).